We begin with the raw amino-acid sequence, 158 residues long: Endoribonuclease YbeY (158 aa).

Zn(2+) contacts are provided by H118, H122, and H128.

The protein belongs to the endoribonuclease YbeY family. Zn(2+) serves as cofactor.

Its subcellular location is the cytoplasm. Single strand-specific metallo-endoribonuclease involved in late-stage 70S ribosome quality control and in maturation of the 3' terminus of the 16S rRNA. The chain is Endoribonuclease YbeY from Bartonella quintana (strain Toulouse) (Rochalimaea quintana).